Reading from the N-terminus, the 478-residue chain is Serine hydroxymethyltransferase, cytosolic (478 aa).

Lys-251 carries the post-translational modification N6-(pyridoxal phosphate)lysine.

Belongs to the SHMT family. As to quaternary structure, homotetramer. Identified in complex with FAM175B and the other subunits of the BRISC complex, at least composed of FAM175B/ABRO1, BRCC3/BRCC36, BABAM2 and BABAM1/NBA1. Pyridoxal 5'-phosphate serves as cofactor.

The protein resides in the cytoplasm. It carries out the reaction (6R)-5,10-methylene-5,6,7,8-tetrahydrofolate + glycine + H2O = (6S)-5,6,7,8-tetrahydrofolate + L-serine. Its pathway is one-carbon metabolism; tetrahydrofolate interconversion. Functionally, interconversion of serine and glycine. The chain is Serine hydroxymethyltransferase, cytosolic (Shmt1) from Mus musculus (Mouse).